Here is a 623-residue protein sequence, read N- to C-terminus: DNA polymerase alpha subunit B (623 aa).

The segment at 113–151 is disordered; that stretch reads IPKIKDEPSSSVDVSTARNKNNHNNNNNNNPSLPNKSMF. Over residues 121–130 the composition is skewed to polar residues; it reads SSSVDVSTAR.

This sequence belongs to the DNA polymerase alpha subunit B family. DNA polymerase alpha:primase is a four subunit enzyme complex, which is assembled throughout the cell cycle, and consists of the two DNA polymerase subunits A and B, and the DNA primase large and small subunits. Subunit B binds to subunit A.

The protein resides in the nucleus. In terms of biological role, may play an essential role at the early stage of chromosomal DNA replication by coupling the polymerase alpha/primase complex to the cellular replication machinery. This chain is DNA polymerase alpha subunit B (polA2), found in Dictyostelium discoideum (Social amoeba).